The following is a 68-amino-acid chain: Beta-defensin 1 (68 aa).

Positions 1-21 (MRTSYLLLFILCLVLCDMDSG) are cleaved as a signal peptide. Positions 22–32 (DTFLTGLGHRS) are excised as a propeptide. Intrachain disulfides connect Cys-37–Cys-66, Cys-44–Cys-59, and Cys-49–Cys-67.

This sequence belongs to the beta-defensin family. In terms of assembly, monomer. Homodimer.

It is found in the secreted. Its subcellular location is the membrane. Its function is as follows. Has bactericidal activity. May act as a ligand for C-C chemokine receptor CCR6. Positively regulates the sperm motility and bactericidal activity in a CCR6-dependent manner. Binds to CCR6 and triggers Ca2+ mobilization in the sperm which is important for its motility. In Saguinus oedipus (Cotton-top tamarin), this protein is Beta-defensin 1 (DEFB1).